A 235-amino-acid chain; its full sequence is Glycerol-3-phosphate acyltransferase (235 aa).

A run of 6 helical transmembrane segments spans residues 4–24 (LIAI…IMAG), 56–76 (AVTL…VAFF), 94–114 (LLAG…GFKG), 122–142 (AGML…IFLL), 152–172 (VASI…KYIF), and 191–211 (FHDS…LAIL).

It belongs to the PlsY family. In terms of assembly, probably interacts with PlsX.

The protein resides in the cell inner membrane. The enzyme catalyses an acyl phosphate + sn-glycerol 3-phosphate = a 1-acyl-sn-glycero-3-phosphate + phosphate. The protein operates within lipid metabolism; phospholipid metabolism. In terms of biological role, catalyzes the transfer of an acyl group from acyl-phosphate (acyl-PO(4)) to glycerol-3-phosphate (G3P) to form lysophosphatidic acid (LPA). This enzyme utilizes acyl-phosphate as fatty acyl donor, but not acyl-CoA or acyl-ACP. The chain is Glycerol-3-phosphate acyltransferase from Chlorobium phaeobacteroides (strain DSM 266 / SMG 266 / 2430).